We begin with the raw amino-acid sequence, 48 residues long: U-reduvitoxin-Pr5a (48 aa).

Positions 1 to 19 are cleaved as a signal peptide; sequence MRLFLIFTFIVASLASVYG. 3 disulfides stabilise this stretch: C20–C34, C27–C39, and C33–C44.

This sequence belongs to the venom Ptu1-like knottin family. As to expression, expressed by the venom gland.

The protein resides in the secreted. Binds reversibly and blocks P/Q-type voltage-gated calcium channels (Cav). In Platymeris rhadamanthus (Red spot assassin bug), this protein is U-reduvitoxin-Pr5a.